Consider the following 465-residue polypeptide: MESLRIYNTLARDKQVFVPRQPGEVRMYVCGITVYDYCHVGHARMLVVFDLVQRWLRAIGYRVTYVRNITDIDDKIIRRAVENGETIKSLTDRFIDAMHEDEDALGIQRPDIEPRATQFIPQMLGMIERLEANGYAYQATDGDVNYSVRKFANYGKLSGKSLDDLRAGERVAANDAKEDPLDFVLWKRAKADDPEGASWESKYGMGRPGWHIECSAMGCTLLGEHFDIHGGGQDLQFPHHENEIAQSEGATGQTFVNYWLHNGFVQVDNEKMSKSLGNFFTIREVLERYDAEVMRFFIVRTHYRSPLNYSDVHLDDARASLTRLYTALKDVEPDALALDWNEPHAQRFAAAMNDDFNTPVAIATLFELAGEVNRTRDASLARQLKQLAGLLGLLGREPRAFLQQASGAAQAGALSVDEIEAKIAARAAAKRAKDYAEADRIRAELLDAGVALEDKPGGSTEWRRV.

C30 contributes to the Zn(2+) binding site. The short motif at 32–42 (ITVYDYCHVGH) is the 'HIGH' region element. Residues C214, H239, and E243 each coordinate Zn(2+). Residues 271–275 (KMSKS) carry the 'KMSKS' region motif. K274 is an ATP binding site.

Belongs to the class-I aminoacyl-tRNA synthetase family. In terms of assembly, monomer. The cofactor is Zn(2+).

It localises to the cytoplasm. It carries out the reaction tRNA(Cys) + L-cysteine + ATP = L-cysteinyl-tRNA(Cys) + AMP + diphosphate. The polypeptide is Cysteine--tRNA ligase (Burkholderia multivorans (strain ATCC 17616 / 249)).